Reading from the N-terminus, the 264-residue chain is Undecaprenyl-diphosphatase (264 aa).

A run of 7 helical transmembrane segments spans residues 42–62 (ESLL…LVVF), 82–102 (TQFS…GLLF), 109–129 (LFGG…LLLW), 146–166 (AFII…RSGA), 184–204 (FSFL…LMSG), 215–235 (ILAT…TWMI), and 243–263 (LSWF…FAYA).

The protein belongs to the UppP family.

The protein resides in the cell membrane. It catalyses the reaction di-trans,octa-cis-undecaprenyl diphosphate + H2O = di-trans,octa-cis-undecaprenyl phosphate + phosphate + H(+). Functionally, catalyzes the dephosphorylation of undecaprenyl diphosphate (UPP). Confers resistance to bacitracin. This Christiangramia forsetii (strain DSM 17595 / CGMCC 1.15422 / KT0803) (Gramella forsetii) protein is Undecaprenyl-diphosphatase.